A 152-amino-acid chain; its full sequence is Transcriptional repressor NrdR (152 aa).

Residues cysteine 3–cysteine 34 fold into a zinc finger. An ATP-cone domain is found at isoleucine 49 to lysine 139.

The protein belongs to the NrdR family. The cofactor is Zn(2+).

Its function is as follows. Negatively regulates transcription of bacterial ribonucleotide reductase nrd genes and operons by binding to NrdR-boxes. In Roseiflexus castenholzii (strain DSM 13941 / HLO8), this protein is Transcriptional repressor NrdR.